The chain runs to 498 residues: GTPase Der (498 aa).

EngA-type G domains are found at residues 3 to 166 (PVVA…FEEL) and 212 to 385 (IKFA…RSAT). GTP is bound by residues 9–16 (GRPNVGKS), 56–60 (DTGGI), 118–121 (NKTD), 218–225 (GRPNVGKS), 265–269 (DTAGV), and 330–333 (NKWD). The region spanning 386–470 (KRISTSMLTR…PIHIEFQEGD (85 aa)) is the KH-like domain.

It belongs to the TRAFAC class TrmE-Era-EngA-EngB-Septin-like GTPase superfamily. EngA (Der) GTPase family. In terms of assembly, associates with the 50S ribosomal subunit.

Functionally, GTPase that plays an essential role in the late steps of ribosome biogenesis. The chain is GTPase Der from Tolumonas auensis (strain DSM 9187 / NBRC 110442 / TA 4).